A 196-amino-acid polypeptide reads, in one-letter code: Probable splicing factor, arginine/serine-rich 4 (196 aa).

Residues 19–97 (TSLKIDNLSY…RELRVTLAKY (79 aa)) enclose the RRM domain. Residues 91-106 (RVTLAKYDRPSDERGG) are compositionally biased toward basic and acidic residues. The segment at 91 to 196 (RVTLAKYDRP…SPSRSRSNSR (106 aa)) is disordered. The segment covering 112 to 141 (GRRRSRSPRRRSRSPRYSRSRSPRRSRSRT) has biased composition (basic residues). Composition is skewed to basic and acidic residues over residues 145 to 160 (PSRD…DNSR) and 167 to 176 (PPREDGSPKE). A compositionally biased stretch (low complexity) spans 184 to 196 (ASRSPSRSRSNSR).

The protein belongs to the splicing factor SR family. Extensively phosphorylated on serine residues in the RS domain.

It is found in the nucleus. In terms of biological role, may play a functionally redundant role in embryogenesis. The polypeptide is Probable splicing factor, arginine/serine-rich 4 (rsp-4) (Caenorhabditis elegans).